Reading from the N-terminus, the 226-residue chain is MSQRTAIALLSGGLDSATAAALALEQGDRVIGLSFDYGQRHLRELDAAAAVAQQLGLAEHHCISVNLASWGGSALTDASISIPTDGVEEGRIPPTYVPGRNTVFISVGLSLAEARGAERLVLGVNAVDYSGYPDCRPDYLNAFQTLADLASKAGREGHGAQLWAPLVQWSKVRIVEEALRLGVPIETTWSCYSGGTHPCGVCDSCRIRDAALREAGRPDLCSSTAA.

An ATP-binding site is contributed by 10 to 20; that stretch reads LSGGLDSATAA. Residues Cys191, Cys199, Cys202, and Cys205 each coordinate Zn(2+).

It belongs to the QueC family. It depends on Zn(2+) as a cofactor.

The catalysed reaction is 7-carboxy-7-deazaguanine + NH4(+) + ATP = 7-cyano-7-deazaguanine + ADP + phosphate + H2O + H(+). It participates in purine metabolism; 7-cyano-7-deazaguanine biosynthesis. Functionally, catalyzes the ATP-dependent conversion of 7-carboxy-7-deazaguanine (CDG) to 7-cyano-7-deazaguanine (preQ(0)). This is 7-cyano-7-deazaguanine synthase from Synechococcus sp. (strain CC9605).